Here is a 483-residue protein sequence, read N- to C-terminus: Centrosomal protein cep57l1 (483 aa).

Residues 94 to 228 adopt a coiled-coil conformation; that stretch reads EHKKVLESEK…AQVQTSLEVN (135 aa). 3 disordered regions span residues 237–261, 303–325, and 416–460; these read AQNS…SKEP, PQVS…GGSR, and KEQP…SKAS. Positions 243–252 are enriched in basic residues; that stretch reads RKVKKKKQSK. Positions 375-418 form a coiled coil; sequence EDLERELDYVVKQMEIKSDQIMKLKRHQLNVNKLKKTAKLLKEQ. The segment covering 420-435 has biased composition (polar residues); it reads RPTSVTKLAADKQNTG.

The protein belongs to the translokin family. As to quaternary structure, interacts with clip1, mis12, ndc80 and zwint. Interacts with gamma-tubulin.

The protein resides in the cytoplasm. The protein localises to the cytoskeleton. Its subcellular location is the microtubule organizing center. It is found in the centrosome. It localises to the chromosome. The protein resides in the centromere. The protein localises to the kinetochore. Its subcellular location is the spindle. Functionally, required for spindle microtubule attachment to both kinetochores and centrosomes. Also functions to tether minus-ends of spindle microtubules to centrosomes. May act by forming ring-like structures around microtubules, or by serving as a cross-linker or scaffold at the attachment site. The polypeptide is Centrosomal protein cep57l1 (cep57l1) (Xenopus tropicalis (Western clawed frog)).